Here is a 553-residue protein sequence, read N- to C-terminus: Urocanate hydratase (553 aa).

NAD(+)-binding positions include 45–46 (GG), glutamine 123, 169–171 (GMG), aspartate 189, arginine 194, 235–236 (NA), 256–260 (QTSAH), 266–267 (YV), tyrosine 315, and glycine 485.

It belongs to the urocanase family. The cofactor is NAD(+).

The protein localises to the cytoplasm. The enzyme catalyses 4-imidazolone-5-propanoate = trans-urocanate + H2O. The protein operates within amino-acid degradation; L-histidine degradation into L-glutamate; N-formimidoyl-L-glutamate from L-histidine: step 2/3. Catalyzes the conversion of urocanate to 4-imidazolone-5-propionate. This is Urocanate hydratase from Staphylococcus aureus (strain MRSA252).